The chain runs to 506 residues: UDP-N-acetylmuramoylalanine--D-glutamate ligase (506 aa).

Residue 128-134 (GTNGKTT) participates in ATP binding.

The protein belongs to the MurCDEF family.

It localises to the cytoplasm. The catalysed reaction is UDP-N-acetyl-alpha-D-muramoyl-L-alanine + D-glutamate + ATP = UDP-N-acetyl-alpha-D-muramoyl-L-alanyl-D-glutamate + ADP + phosphate + H(+). It functions in the pathway cell wall biogenesis; peptidoglycan biosynthesis. Its function is as follows. Cell wall formation. Catalyzes the addition of glutamate to the nucleotide precursor UDP-N-acetylmuramoyl-L-alanine (UMA). The polypeptide is UDP-N-acetylmuramoylalanine--D-glutamate ligase (Albidiferax ferrireducens (strain ATCC BAA-621 / DSM 15236 / T118) (Rhodoferax ferrireducens)).